The sequence spans 91 residues: Gene 76 protein (91 aa).

The interval 58 to 81 is disordered; the sequence is ELPSCDESPKGEARRDNDNRDGGK.

In Mycobacterium phage L5 (Mycobacteriophage L5), this protein is Gene 76 protein (76).